The chain runs to 317 residues: Ribosomal protein L11 methyltransferase (317 aa).

S-adenosyl-L-methionine-binding residues include T158, G179, D201, and N244.

Belongs to the methyltransferase superfamily. PrmA family.

The protein localises to the cytoplasm. The catalysed reaction is L-lysyl-[protein] + 3 S-adenosyl-L-methionine = N(6),N(6),N(6)-trimethyl-L-lysyl-[protein] + 3 S-adenosyl-L-homocysteine + 3 H(+). Methylates ribosomal protein L11. The chain is Ribosomal protein L11 methyltransferase from Streptococcus equi subsp. zooepidemicus (strain H70).